We begin with the raw amino-acid sequence, 716 residues long: ATP-dependent zinc metalloprotease FTSH 1, chloroplastic (716 aa).

The N-terminal 48 residues, 1-48, are a transit peptide targeting the chloroplast; that stretch reads MASNSLLRSSSNFFLGSHIIISSPTPKTTRKPSFPFSFVSRAKYQITR. A thylakoid-targeting transit peptide spans 49-86; sequence SSQDENSPNGKPNSPFSSQVALAAILLSSISSSPLALA. The helical transmembrane segment at 204–224 threads the bilayer; that stretch reads FTVIGNLIFPLLAFGGLFLLF. 302-309 contacts ATP; the sequence is GPPGTGKT. Residue H524 coordinates Zn(2+). E525 is a catalytic residue. 2 residues coordinate Zn(2+): H528 and D605.

This sequence in the N-terminal section; belongs to the AAA ATPase family. It in the C-terminal section; belongs to the peptidase M41 family. As to quaternary structure, interacts with CHIP and HSP70. Heterohexamers with FTSH2, FTSH5 and FTSH8. It depends on Zn(2+) as a cofactor. In terms of processing, the FTSH1 precursor is ubiquitinated by CHIP in the cytoplasm. Ubiquitous.

It localises to the plastid. It is found in the chloroplast thylakoid membrane. Functionally, part of a complex that function as an ATP-dependent zinc metallopeptidase. Involved in the thylakoid formation and in the removal of damaged D1 in the photosystem II, preventing cell death under high-intensity light conditions. This is ATP-dependent zinc metalloprotease FTSH 1, chloroplastic (FTSH1) from Arabidopsis thaliana (Mouse-ear cress).